Consider the following 385-residue polypeptide: Alanine--glyoxylate aminotransferase 1 (385 aa).

Lys-201 bears the N6-(pyridoxal phosphate)lysine mark. Position 354 (Arg-354) interacts with substrate.

This sequence belongs to the class-V pyridoxal-phosphate-dependent aminotransferase family. Homodimer. The cofactor is pyridoxal 5'-phosphate.

It catalyses the reaction glyoxylate + L-alanine = glycine + pyruvate. The protein operates within amino-acid biosynthesis; glycine biosynthesis; glycine from glyoxylate: step 1/1. Functionally, has alanine:glyoxylate aminotransferase activity. In Saccharomyces cerevisiae (strain ATCC 204508 / S288c) (Baker's yeast), this protein is Alanine--glyoxylate aminotransferase 1.